A 188-amino-acid polypeptide reads, in one-letter code: MDLLIVGLGNPGSNFFHTRHNVGFGLIDKLVVKHGLSLKKVKNYEYSDFNFENKRIVLIKPLTYMNLSGNIFPSVFARFYMKMTNLLIVVDNVDLPLGKCKLRKVGGTSTHNGLRSISGSLGSTKYSRLYIGVGNNNESSLRDFVLAKFSDSELKRIKNVFNFLSEEILSIDECNFENKIATINSSSF.

F15 contributes to the tRNA binding site. The Proton acceptor role is filled by H20. TRNA contacts are provided by Y64, N66, and N112.

Belongs to the PTH family. Monomer.

It localises to the cytoplasm. It carries out the reaction an N-acyl-L-alpha-aminoacyl-tRNA + H2O = an N-acyl-L-amino acid + a tRNA + H(+). Its function is as follows. Hydrolyzes ribosome-free peptidyl-tRNAs (with 1 or more amino acids incorporated), which drop off the ribosome during protein synthesis, or as a result of ribosome stalling. In terms of biological role, catalyzes the release of premature peptidyl moieties from peptidyl-tRNA molecules trapped in stalled 50S ribosomal subunits, and thus maintains levels of free tRNAs and 50S ribosomes. This is Peptidyl-tRNA hydrolase from Borrelia turicatae (strain 91E135).